The following is a 364-amino-acid chain: Valine dehydrogenase (364 aa).

The active site involves Lys91. 191–197 (GVGKVGH) contributes to the NAD(+) binding site.

Belongs to the Glu/Leu/Phe/Val dehydrogenases family. In terms of assembly, homodimer.

The protein localises to the cytoplasm. The enzyme catalyses L-valine + NAD(+) + H2O = 3-methyl-2-oxobutanoate + NH4(+) + NADH + H(+). Its pathway is amino-acid degradation; L-valine degradation. With respect to regulation, inhibited by pyridoxal 5'-phosphate (PLP). In terms of biological role, oxidative deamination of branched-chain amino acids. Oxidizes L-valine and L-alpha-aminobutyric acid efficiently, and L-alanine and L-isoleucine less efficiently. D-valine and L-glutamate were not substrates for the enzyme. The catabolism of valine is the major source of fatty acid precursors for macrolide biosynthesis and a vital source of antibiotic precursors. The polypeptide is Valine dehydrogenase (Streptomyces albus (strain ATCC 21838 / DSM 41398 / FERM P-419 / JCM 4703 / NBRC 107858)).